The following is a 102-amino-acid chain: NADH-quinone oxidoreductase subunit K (102 aa).

The next 3 membrane-spanning stretches (helical) occupy residues 5 to 25, 31 to 51, and 62 to 82; these read LAHYLILGAILFAIGIFGIFL, IILLMSIELVLLAVNMNFVAF, and VFVFFILTVAAAEAAIGLAIL.

The protein belongs to the complex I subunit 4L family. NDH-1 is composed of 14 different subunits. Subunits NuoA, H, J, K, L, M, N constitute the membrane sector of the complex.

The protein resides in the cell inner membrane. The enzyme catalyses a quinone + NADH + 5 H(+)(in) = a quinol + NAD(+) + 4 H(+)(out). NDH-1 shuttles electrons from NADH, via FMN and iron-sulfur (Fe-S) centers, to quinones in the respiratory chain. The immediate electron acceptor for the enzyme in this species is believed to be ubiquinone. Couples the redox reaction to proton translocation (for every two electrons transferred, four hydrogen ions are translocated across the cytoplasmic membrane), and thus conserves the redox energy in a proton gradient. The sequence is that of NADH-quinone oxidoreductase subunit K from Bordetella parapertussis (strain 12822 / ATCC BAA-587 / NCTC 13253).